The primary structure comprises 387 residues: 3-ketoacyl-CoA thiolase (387 aa).

Cysteine 91 serves as the catalytic Acyl-thioester intermediate. Catalysis depends on proton acceptor residues histidine 343 and cysteine 373.

It belongs to the thiolase-like superfamily. Thiolase family. Heterotetramer of two alpha chains (FadB) and two beta chains (FadA).

It is found in the cytoplasm. The enzyme catalyses an acyl-CoA + acetyl-CoA = a 3-oxoacyl-CoA + CoA. It functions in the pathway lipid metabolism; fatty acid beta-oxidation. In terms of biological role, catalyzes the final step of fatty acid oxidation in which acetyl-CoA is released and the CoA ester of a fatty acid two carbons shorter is formed. The protein is 3-ketoacyl-CoA thiolase of Shigella dysenteriae serotype 1 (strain Sd197).